The chain runs to 448 residues: MSSVSTASLNCLPDELLVHVLSSLETKQAASTSVLSKRWRTLFAVRRNLDFDDSIISHPEVGEQNMDDVQESFRDFVDKRLAFQGSVPINKFSLIYGDKHDDVRVDRWINTALEHGVSELHLCLTSVTRRLHRFPSNVFRSTTLVKLTLGTNLFIVYFPSDTCLPVLKILVLDSIWFDRIKFSNVLLAGCPALEDLTIDQKSFPGLPNVVSSKTVKSLSIVYKYSADFDWFRTVALDTPNLVTLLYSTYARHRYRHCNLESLVNATLDLHFLENCDEAFEPNVTDLMIAVRNVQMLHLTSSATEVISQCCKGGLPMFKNLLVLVFLGNTERVWKVFLPLLLEHSPNLTKLCLESLFLILQGLYHGTDEDEFDEIHIPRSNKVNMLRIIQCQGTENELKHISHFLLKMECLQLVQVNFSETIVDSKKVQLTEDLMKLPSASSRLTMQVI.

An F-box domain is found at 6–54; the sequence is TASLNCLPDELLVHVLSSLETKQAASTSVLSKRWRTLFAVRRNLDFDDS. LRR repeat units follow at residues 117–141, 143–165, 190–213, 228–251, 290–313, and 421–443; these read VSELHLCLTSVTRRLHRFPSNVFRS, TLVKLTLGTNLFIVYFPSDTCLP, CPALEDLTIDQKSFPGLPNVVSSK, FDWFRTVALDTPNLVTLLYSTYAR, VRNVQMLHLTSSATEVISQCCKGG, and IVDSKKVQLTEDLMKLPSASSRL.

The sequence is that of Putative F-box/LRR-repeat protein At3g44810 from Arabidopsis thaliana (Mouse-ear cress).